Consider the following 432-residue polypeptide: MGKSVVILGAQWGDEGKGKIVDLLTDRVKYVVRYQGGHNAGHTLIINGEKTVLRLIPSGMLHPNVTCLIGNGVVVSPEALMKEMGELESRGIKVRERLLISEACPLILPYHVAMDHAREAALGKKAIGTTGRGIGPAYEDKVARRGLRIGDLFNKEAFAEKLKNILEYYNFQLVNYYKVEPVDYQKTLDDVMAIADVITGMVADITTILDTARKNGEHILFEGAQGTMLDIDHGTYPYVTSSNTTAGGVATGSGFGPRNLDYVLGIIKAYCTRVGGGPFTTELFDDVGAEIARKGNEFGAVTGRPRRCGWFDAVAIRRAIQLNSISGFCMTKLDVLDGFDEVKICVAYKMPNGEIVEYAPLAAKDWDGVEPIYETLPGWKENTFRITDVNKLPQNCINYIKRIEEVTGVPIDILSTGPDRVETMILRDPFAA.

GTP is bound by residues 13-19 and 41-43; these read GDEGKGK and GHT. The Proton acceptor role is filled by D14. 2 residues coordinate Mg(2+): D14 and G41. IMP contacts are provided by residues 14–17, 39–42, T130, R144, Q225, T240, and R304; these read DEGK and NAGH. Residue H42 is the Proton donor of the active site. 300-306 lines the substrate pocket; it reads AVTGRPR. Residues R306, 332–334, and 415–417 contribute to the GTP site; these read KLD and STG.

It belongs to the adenylosuccinate synthetase family. As to quaternary structure, homodimer. It depends on Mg(2+) as a cofactor.

The protein localises to the cytoplasm. It catalyses the reaction IMP + L-aspartate + GTP = N(6)-(1,2-dicarboxyethyl)-AMP + GDP + phosphate + 2 H(+). The protein operates within purine metabolism; AMP biosynthesis via de novo pathway; AMP from IMP: step 1/2. Functionally, plays an important role in the de novo pathway of purine nucleotide biosynthesis. Catalyzes the first committed step in the biosynthesis of AMP from IMP. This chain is Adenylosuccinate synthetase, found in Haemophilus influenzae (strain PittGG).